The following is a 128-amino-acid chain: Small ribosomal subunit protein uS11 (128 aa).

It belongs to the universal ribosomal protein uS11 family. As to quaternary structure, part of the 30S ribosomal subunit. Interacts with proteins S7 and S18. Binds to IF-3.

Its function is as follows. Located on the platform of the 30S subunit, it bridges several disparate RNA helices of the 16S rRNA. Forms part of the Shine-Dalgarno cleft in the 70S ribosome. This Desulfosudis oleivorans (strain DSM 6200 / JCM 39069 / Hxd3) (Desulfococcus oleovorans) protein is Small ribosomal subunit protein uS11.